The sequence spans 154 residues: Anti-sigma-E factor RseA (154 aa).

At T39 the chain carries Phosphothreonine; by PknB. Positions 66, 70, and 73 each coordinate Zn(2+). The segment at 104 to 154 is disordered; it reads SEIPRCPPEGPSKGSSGGSSQGPPDGAAAGFGDRFADGDGGNRGRQSRVRR. Low complexity predominate over residues 124 to 136; it reads QGPPDGAAAGFGD.

This sequence belongs to the zinc-associated anti-sigma factor (ZAS) superfamily. In terms of assembly, interacts with cognate ECF RNA polymerase sigma factor SigE under reducing conditions; this inhibits the interaction of SigE with the RNA polymerase catalytic core. Requires Zn(2+) as cofactor. Phosphorylated by PknB on Thr-39; can be dephosphorylated (at least in vitro) by PstP. Phosphorylation is the signal for subsequent degradation by the ClpC1-ClpP2 complex. Post-translationally, degraded following vancomycin treatment (surface stress) by a ClpC1-ClpP2 complex.

It is found in the cytoplasm. In terms of biological role, an anti-sigma factor for extracytoplasmic function (ECF) sigma factor SigE. ECF sigma factors are held in an inactive form by an anti-sigma factor. The chain is Anti-sigma-E factor RseA (rseA) from Mycobacterium tuberculosis (strain ATCC 25618 / H37Rv).